A 284-amino-acid chain; its full sequence is Nucleotide-binding protein Shal_3708 (284 aa).

8 to 15 (GRSGSGKS) contacts ATP. Residue 56–59 (DIRN) participates in GTP binding.

This sequence belongs to the RapZ-like family.

In terms of biological role, displays ATPase and GTPase activities. This Shewanella halifaxensis (strain HAW-EB4) protein is Nucleotide-binding protein Shal_3708.